A 252-amino-acid polypeptide reads, in one-letter code: Hydroxyacylglutathione hydrolase (252 aa).

The Zn(2+) site is built by histidine 54, histidine 56, aspartate 58, histidine 59, histidine 111, aspartate 130, and histidine 170.

The protein belongs to the metallo-beta-lactamase superfamily. Glyoxalase II family. As to quaternary structure, monomer. Zn(2+) is required as a cofactor.

It carries out the reaction an S-(2-hydroxyacyl)glutathione + H2O = a 2-hydroxy carboxylate + glutathione + H(+). It participates in secondary metabolite metabolism; methylglyoxal degradation; (R)-lactate from methylglyoxal: step 2/2. In terms of biological role, thiolesterase that catalyzes the hydrolysis of S-D-lactoyl-glutathione to form glutathione and D-lactic acid. The sequence is that of Hydroxyacylglutathione hydrolase from Francisella tularensis subsp. novicida (strain U112).